Consider the following 145-residue polypeptide: Ubiquitin-conjugating enzyme E2 variant 1C (145 aa).

Residues 12–145 (PRNFRLLEEL…LVQPPEGTFF (134 aa)) enclose the UBC core domain.

It belongs to the ubiquitin-conjugating enzyme family. Heterodimer with UBC35 or UBC36. Expressed in roots, shoots, leaves, stems and flowers, but not in pollen.

In terms of biological role, has no ubiquitin ligase activity on its own. The heterodimer with UBC catalyzes the synthesis of non-canonical poly-ubiquitin chains that are linked through 'Lys-63'. This type of poly-ubiquitination does not lead to protein degradation by the proteasome. Mediates transcriptional activation of target genes. May play a role in the control of progress through the cell cycle and differentiation. May play a role in the error-free DNA repair pathway and contributes to the survival of cells after DNA damage. The protein is Ubiquitin-conjugating enzyme E2 variant 1C (UEV1C) of Arabidopsis thaliana (Mouse-ear cress).